The primary structure comprises 616 residues: Replication protein A 70 kDa DNA-binding subunit (616 aa).

Met1 is subject to N-acetylmethionine. Residues Lys22 and Lys88 each participate in a glycyl lysine isopeptide (Lys-Gly) (interchain with G-Cter in ubiquitin) cross-link. A disordered region spans residues 121-155 (GLGQPQVAPPAPAASPAASSRPQPQNGTSGAGSTV). Low complexity predominate over residues 134–145 (ASPAASSRPQPQ). Polar residues predominate over residues 146 to 155 (NGTSGAGSTV). N6-acetyllysine; alternate is present on residues Lys163 and Lys167. Residues Lys163 and Lys167 each participate in a glycyl lysine isopeptide (Lys-Gly) (interchain with G-Cter in ubiquitin); alternate cross-link. Residue Thr180 is modified to Phosphothreonine. Lys183 participates in a covalent cross-link: Glycyl lysine isopeptide (Lys-Gly) (interchain with G-Cter in ubiquitin). Thr191 bears the Phosphothreonine mark. A DNA-binding region (OB) is located at residues 197-281 (WTICARVTNK…VKNDYEMTFN (85 aa)). Residues Lys220 and Lys244 each participate in a glycyl lysine isopeptide (Lys-Gly) (interchain with G-Cter in ubiquitin) cross-link. Lys259 bears the N6-acetyllysine; alternate mark. Lys259 is covalently cross-linked (Glycyl lysine isopeptide (Lys-Gly) (interchain with G-Cter in ubiquitin); alternate). Glycyl lysine isopeptide (Lys-Gly) (interchain with G-Cter in ubiquitin) cross-links involve residues Lys267 and Lys331. Ser384 carries the post-translational modification Phosphoserine. Residues Lys410 and Lys431 each participate in a glycyl lysine isopeptide (Lys-Gly) (interchain with G-Cter in ubiquitin) cross-link. Residue Lys449 forms a Glycyl lysine isopeptide (Lys-Gly) (interchain with G-Cter in SUMO) linkage. Lys458 participates in a covalent cross-link: Glycyl lysine isopeptide (Lys-Gly) (interchain with G-Cter in ubiquitin). The C4-type zinc-finger motif lies at 481-503 (CPTQDCNKKVIDQQNGLYRCEKC). A Glycyl lysine isopeptide (Lys-Gly) (interchain with G-Cter in ubiquitin) cross-link involves residue Lys553. Lys577 participates in a covalent cross-link: Glycyl lysine isopeptide (Lys-Gly) (interchain with G-Cter in SUMO).

It belongs to the replication factor A protein 1 family. Component of the canonical replication protein A complex (RPA), a heterotrimer composed of RPA1, RPA2 and RPA3. The DNA-binding activity may reside exclusively on the RPA1 subunit. Interacts with PRPF19; the PRP19-CDC5L complex is recruited to the sites of DNA repair where it ubiquitinates the replication protein A complex (RPA). Interacts with RIPK1. Interacts with the polymerase alpha subunit POLA1/p180; this interaction stabilizes the replicative complex and reduces the misincorporation rate of DNA polymerase alpha by acting as a fidelity clamp. Interacts with RAD51 and SENP6 to regulate DNA repair. Interacts with HELB; this interaction promotes HELB recruitment to chromatin following DNA damage. Interacts with PRIMPOL; leading to recruit PRIMPOL on chromatin and stimulate its DNA primase activity. Interacts with XPA; the interaction is direct and associates XPA with the RPA complex. Interacts with ETAA1; the interaction is direct and promotes ETAA1 recruitment at stalled replication forks. Interacts with RPA1; this interaction associates HROB with the RPA complex. Interacts (when poly-ADP-ribosylated) with HTATSF1. DNA damage-induced 'Lys-63'-linked polyubiquitination by PRPF19 mediates ATRIP recruitment to the RPA complex at sites of DNA damage and activation of ATR. Ubiquitinated by RFWD3 at stalled replication forks in response to DNA damage: ubiquitination by RFWD3 does not lead to degradation by the proteasome and promotes removal of the RPA complex from stalled replication forks, promoting homologous recombination. In terms of processing, sumoylated on lysine residues Lys-449 and Lys-577, with Lys-449 being the major site. Sumoylation promotes recruitment of RAD51 to the DNA damage foci to initiate DNA repair through homologous recombination. Desumoylated by SENP6. Post-translationally, poly-ADP-ribosylated by PARP1; promoting recruitment of HTATSF1.

The protein localises to the nucleus. Its subcellular location is the PML body. Functionally, as part of the heterotrimeric replication protein A complex (RPA/RP-A), binds and stabilizes single-stranded DNA intermediates, that form during DNA replication or upon DNA stress. It prevents their reannealing and in parallel, recruits and activates different proteins and complexes involved in DNA metabolism. Thereby, it plays an essential role both in DNA replication and the cellular response to DNA damage. In the cellular response to DNA damage, the RPA complex controls DNA repair and DNA damage checkpoint activation. Through recruitment of ATRIP activates the ATR kinase a master regulator of the DNA damage response. It is required for the recruitment of the DNA double-strand break repair factors RAD51 and RAD52 to chromatin in response to DNA damage. Also recruits to sites of DNA damage proteins like XPA and XPG that are involved in nucleotide excision repair and is required for this mechanism of DNA repair. Also plays a role in base excision repair (BER) probably through interaction with UNG. Also recruits SMARCAL1/HARP, which is involved in replication fork restart, to sites of DNA damage. May also play a role in telomere maintenance. This chain is Replication protein A 70 kDa DNA-binding subunit (RPA1), found in Pongo abelii (Sumatran orangutan).